A 525-amino-acid polypeptide reads, in one-letter code: Putative ankyrin repeat protein FPV228 (525 aa).

ANK repeat units follow at residues histidine 39 to isoleucine 71, leucine 72 to asparagine 122, leucine 123 to isoleucine 152, tyrosine 156 to isoleucine 185, tyrosine 190 to arginine 226, leucine 227 to alanine 254, asparagine 258 to methionine 287, arginine 291 to isoleucine 320, and isoleucine 324 to histidine 353.

The sequence is that of Putative ankyrin repeat protein FPV228 from Fowlpox virus (strain NVSL) (FPV).